Consider the following 533-residue polypeptide: CTP synthase (533 aa).

Positions 1 to 269 (MKKNLKILVI…HEILSSKLNI (269 aa)) are amidoligase domain. Position 16 (S16) interacts with CTP. UTP is bound at residue S16. ATP is bound by residues 17-22 (GIGKGV) and D73. D73 and E143 together coordinate Mg(2+). Residues 150–152 (DME), 190–195 (KSKPTQ), and K226 each bind CTP. Residues 190 to 195 (KSKPTQ) and K226 each bind UTP. In terms of domain architecture, Glutamine amidotransferase type-1 spans 304-533 (YAELDDSYAS…LFLGLIKACI (230 aa)). G355 lines the L-glutamine pocket. Catalysis depends on C382, which acts as the Nucleophile; for glutamine hydrolysis. Residues 383-386 (LGLQ), E406, and R466 each bind L-glutamine. Active-site residues include H511 and E513.

Belongs to the CTP synthase family. As to quaternary structure, homotetramer.

The enzyme catalyses UTP + L-glutamine + ATP + H2O = CTP + L-glutamate + ADP + phosphate + 2 H(+). The catalysed reaction is L-glutamine + H2O = L-glutamate + NH4(+). It carries out the reaction UTP + NH4(+) + ATP = CTP + ADP + phosphate + 2 H(+). Its pathway is pyrimidine metabolism; CTP biosynthesis via de novo pathway; CTP from UDP: step 2/2. Its activity is regulated as follows. Allosterically activated by GTP, when glutamine is the substrate; GTP has no effect on the reaction when ammonia is the substrate. The allosteric effector GTP functions by stabilizing the protein conformation that binds the tetrahedral intermediate(s) formed during glutamine hydrolysis. Inhibited by the product CTP, via allosteric rather than competitive inhibition. In terms of biological role, catalyzes the ATP-dependent amination of UTP to CTP with either L-glutamine or ammonia as the source of nitrogen. Regulates intracellular CTP levels through interactions with the four ribonucleotide triphosphates. The polypeptide is CTP synthase (Borreliella afzelii (strain PKo) (Borrelia afzelii)).